Reading from the N-terminus, the 90-residue chain is Succinate dehydrogenase subunit 7, mitochondrial (90 aa).

The N-terminal 41 residues, 1–41 (MAQPAFLSALRSRLRSPQPQAPALPHLQPPRRGFHVELGAR), are a transit peptide targeting the mitochondrion.

Component of complex II composed of eight subunits in plants: four classical SDH subunits SDH1, SDH2, SDH3 and SDH4 (a flavoprotein (FP), an iron-sulfur protein (IP), and a cytochrome b composed of a large and a small subunit.), as well as four subunits unknown in mitochondria from bacteria and heterotrophic eukaryotes.

Its subcellular location is the mitochondrion inner membrane. It participates in carbohydrate metabolism; tricarboxylic acid cycle. The polypeptide is Succinate dehydrogenase subunit 7, mitochondrial (Oryza sativa subsp. japonica (Rice)).